The primary structure comprises 240 residues: Large ribosomal subunit protein uL2 (240 aa).

The segment covering 1–11 has biased composition (polar residues); it reads MGKRLISQNRG. 2 disordered regions span residues 1–28 and 206–240; these read MGKR…KGAV and GGGR…TGRK. Composition is skewed to basic residues over residues 13–28 and 224–240; these read GTPK…KGAV and SPGR…TGRK.

It belongs to the universal ribosomal protein uL2 family. As to quaternary structure, part of the 50S ribosomal subunit. Forms a bridge to the 30S subunit in the 70S ribosome.

Its function is as follows. One of the primary rRNA binding proteins. Required for association of the 30S and 50S subunits to form the 70S ribosome, for tRNA binding and peptide bond formation. It has been suggested to have peptidyltransferase activity; this is somewhat controversial. Makes several contacts with the 16S rRNA in the 70S ribosome. The protein is Large ribosomal subunit protein uL2 of Methanococcus maripaludis (strain C5 / ATCC BAA-1333).